The sequence spans 158 residues: Large ribosomal subunit protein uL16 (158 aa).

It belongs to the universal ribosomal protein uL16 family. Part of the 50S ribosomal subunit.

Functionally, binds 23S rRNA and is also seen to make contacts with the A and possibly P site tRNAs. The chain is Large ribosomal subunit protein uL16 from Parasynechococcus marenigrum (strain WH8102).